Here is a 327-residue protein sequence, read N- to C-terminus: Zinc transport protein ZntB (327 aa).

Over 1–273 (MEAIKGSDVN…ARRTYTMSLM (273 aa)) the chain is Cytoplasmic. A helical transmembrane segment spans residues 274–294 (AMVFLPSTFLTGLFGVNLGGI). Residues 295–300 (PGGGWQ) are Periplasmic-facing. Residues 301-321 (FGFSIFCILLVVLIGGVALWL) traverse the membrane as a helical segment. At 322-327 (HRSKWL) the chain is on the cytoplasmic side.

This sequence belongs to the CorA metal ion transporter (MIT) (TC 1.A.35) family.

It localises to the cell inner membrane. The catalysed reaction is Zn(2+)(out) + H(+)(out) = Zn(2+)(in) + H(+)(in). Its function is as follows. Zinc transporter. Acts as a Zn(2+):proton symporter, which likely mediates zinc ion uptake. The sequence is that of Zinc transport protein ZntB from Escherichia coli O8 (strain IAI1).